The primary structure comprises 274 residues: Phosphatidylglycerol--prolipoprotein diacylglyceryl transferase (274 aa).

Transmembrane regions (helical) follow at residues 19 to 39 (VGSV…VLGL), 59 to 79 (LAIW…VLFQ), 93 to 113 (IWRG…AALI), and 120 to 140 (VSFW…QAIG). Arg-141 contacts a 1,2-diacyl-sn-glycero-3-phospho-(1'-sn-glycerol). 3 consecutive transmembrane segments (helical) span residues 181 to 201 (TFLY…ALFF), 209 to 229 (GTIF…IEGL), and 243 to 263 (QVVS…LYLL).

This sequence belongs to the Lgt family.

The protein localises to the cell inner membrane. It catalyses the reaction L-cysteinyl-[prolipoprotein] + a 1,2-diacyl-sn-glycero-3-phospho-(1'-sn-glycerol) = an S-1,2-diacyl-sn-glyceryl-L-cysteinyl-[prolipoprotein] + sn-glycerol 1-phosphate + H(+). The protein operates within protein modification; lipoprotein biosynthesis (diacylglyceryl transfer). Functionally, catalyzes the transfer of the diacylglyceryl group from phosphatidylglycerol to the sulfhydryl group of the N-terminal cysteine of a prolipoprotein, the first step in the formation of mature lipoproteins. In Acaryochloris marina (strain MBIC 11017), this protein is Phosphatidylglycerol--prolipoprotein diacylglyceryl transferase.